The primary structure comprises 286 residues: 4-diphosphocytidyl-2-C-methyl-D-erythritol kinase (286 aa).

Residue Lys-13 is part of the active site. Residue 101–111 (PQGAGLGGGSS) coordinates ATP. Residue Asp-143 is part of the active site.

The protein belongs to the GHMP kinase family. IspE subfamily.

The catalysed reaction is 4-CDP-2-C-methyl-D-erythritol + ATP = 4-CDP-2-C-methyl-D-erythritol 2-phosphate + ADP + H(+). Its pathway is isoprenoid biosynthesis; isopentenyl diphosphate biosynthesis via DXP pathway; isopentenyl diphosphate from 1-deoxy-D-xylulose 5-phosphate: step 3/6. In terms of biological role, catalyzes the phosphorylation of the position 2 hydroxy group of 4-diphosphocytidyl-2C-methyl-D-erythritol. The sequence is that of 4-diphosphocytidyl-2-C-methyl-D-erythritol kinase from Idiomarina loihiensis (strain ATCC BAA-735 / DSM 15497 / L2-TR).